The primary structure comprises 443 residues: Alpha-1,3/1,6-mannosyltransferase ALG2 (443 aa).

A helical membrane pass occupies residues 80–100 (IFFAILRQFYLVCWLIFTGTI). N-linked (GlcNAc...) asparagine glycosylation is found at N173, N207, and N304.

The protein belongs to the glycosyltransferase group 1 family.

The protein localises to the endoplasmic reticulum membrane. The catalysed reaction is a beta-D-Man-(1-&gt;4)-beta-D-GlcNAc-(1-&gt;4)-alpha-D-GlcNAc-diphospho-di-trans,poly-cis-dolichol + GDP-alpha-D-mannose = an alpha-D-Man-(1-&gt;3)-beta-D-Man-(1-&gt;4)-beta-D-GlcNAc-(1-&gt;4)-alpha-D-GlcNAc-diphospho-di-trans,poly-cis-dolichol + GDP + H(+). It carries out the reaction an alpha-D-Man-(1-&gt;3)-beta-D-Man-(1-&gt;4)-beta-D-GlcNAc-(1-&gt;4)-alpha-D-GlcNAc-diphospho-di-trans,poly-cis-dolichol + GDP-alpha-D-mannose = an alpha-D-Man-(1-&gt;3)-[alpha-D-Man-(1-&gt;6)]-beta-D-Man-(1-&gt;4)-beta-D-GlcNAc-(1-&gt;4)-alpha-D-GlcNAc-diphospho-di-trans,poly-cis-dolichol + GDP + H(+). It functions in the pathway protein modification; protein glycosylation. Mannosylates Man(2)GlcNAc(2)-dolichol diphosphate and Man(1)GlcNAc(2)-dolichol diphosphate to form Man(3)GlcNAc(2)-dolichol diphosphate. This Candida albicans (strain SC5314 / ATCC MYA-2876) (Yeast) protein is Alpha-1,3/1,6-mannosyltransferase ALG2 (ALG2).